Consider the following 425-residue polypeptide: Enolase (425 aa).

Gln-163 is a binding site for (2R)-2-phosphoglycerate. The active-site Proton donor is Glu-205. Mg(2+) contacts are provided by Asp-242, Glu-285, and Asp-312. (2R)-2-phosphoglycerate is bound by residues Lys-337, Arg-366, Ser-367, and Lys-388. The active-site Proton acceptor is the Lys-337.

The protein belongs to the enolase family. It depends on Mg(2+) as a cofactor.

The protein resides in the cytoplasm. It localises to the secreted. It is found in the cell surface. The enzyme catalyses (2R)-2-phosphoglycerate = phosphoenolpyruvate + H2O. It functions in the pathway carbohydrate degradation; glycolysis; pyruvate from D-glyceraldehyde 3-phosphate: step 4/5. In terms of biological role, catalyzes the reversible conversion of 2-phosphoglycerate (2-PG) into phosphoenolpyruvate (PEP). It is essential for the degradation of carbohydrates via glycolysis. The sequence is that of Enolase from Ruegeria sp. (strain TM1040) (Silicibacter sp.).